The following is a 121-amino-acid chain: Large ribosomal subunit protein bL12 (121 aa).

This sequence belongs to the bacterial ribosomal protein bL12 family. In terms of assembly, homodimer. Part of the ribosomal stalk of the 50S ribosomal subunit. Forms a multimeric L10(L12)X complex, where L10 forms an elongated spine to which 2 to 4 L12 dimers bind in a sequential fashion. Binds GTP-bound translation factors.

Functionally, forms part of the ribosomal stalk which helps the ribosome interact with GTP-bound translation factors. Is thus essential for accurate translation. This Limosilactobacillus reuteri (strain DSM 20016) (Lactobacillus reuteri) protein is Large ribosomal subunit protein bL12.